Here is a 102-residue protein sequence, read N- to C-terminus: MSLFKILVAAATVATALAAPHEHKKPHPSYGDANAQCGNHQKLSCCNRGDSGGVLDGLLGGNCQPINILALLPIQNQCTNQVACCTGNSNGLINIPCTNVNL.

Positions 1–18 are cleaved as a signal peptide; it reads MSLFKILVAAATVATALA. 4 cysteine pairs are disulfide-bonded: C37-C84, C45-C78, C46-C63, and C85-C97.

Belongs to the fungal hydrophobin family.

It is found in the secreted. The protein resides in the cell wall. Aerial growth, conidiation, and dispersal of filamentous fungi in the environment rely upon a capability of their secreting small amphipathic proteins called hydrophobins (HPBs) with low sequence identity. Class I can self-assemble into an outermost layer of rodlet bundles on aerial cell surfaces, conferring cellular hydrophobicity that supports fungal growth, development and dispersal; whereas Class II form highly ordered films at water-air interfaces through intermolecular interactions but contribute nothing to the rodlet structure. Hyd1 is essential for stress tolerance, conidial hydrophobicity, adhesion to insect cuticle, and insect infectivity/pathogenicity. Plays a neglectable role in hyphal growth and asexual development. The sequence is that of Class I hydrophobin 1 from Metarhizium robertsii (strain ARSEF 23 / ATCC MYA-3075) (Metarhizium anisopliae (strain ARSEF 23)).